Consider the following 375-residue polypeptide: Putrescine N-methyltransferase 1 (375 aa).

Polar residues-rich tracts occupy residues His-24–Thr-50 and His-57–Leu-77. The disordered stretch occupies residues His-24–Leu-77. The PABS domain maps to Pro-86–Thr-323. Residues Gln-117, Glu-192, and Asp-223–Gly-224 contribute to the S-adenosyl-L-methionine site. Catalysis depends on Asp-242, which acts as the Proton acceptor. Tyr-311 lines the S-adenosyl-L-methionine pocket.

It belongs to the class I-like SAM-binding methyltransferase superfamily. Putrescine methyltransferase family. As to expression, predominantly expressed in roots.

The enzyme catalyses putrescine + S-adenosyl-L-methionine = N-methylputrescine + S-adenosyl-L-homocysteine + H(+). It participates in alkaloid biosynthesis; nicotine biosynthesis. Functionally, involved in the biosynthesis of pyridine alkaloid natural products, leading mainly to the production of anabasine, anatabine, nicotine and nornicotine, effective deterrents against herbivores with antiparasitic and pesticide properties (neurotoxins); nornicotine serves as the precursor in the synthesis of the carcinogen compound N'-nitrosonornicotine (NNN). Methyltransferase that mediates the conversion of putrescine to N-methylputrescine. Promotes leaves ripening. The sequence is that of Putrescine N-methyltransferase 1 from Nicotiana tabacum (Common tobacco).